Consider the following 633-residue polypeptide: Probable potassium transport system protein Kup (633 aa).

Helical transmembrane passes span 19 to 39, 61 to 81, 112 to 132, 148 to 168, 179 to 199, 217 to 237, 258 to 278, 290 to 310, 348 to 368, 380 to 400, 405 to 425, and 430 to 450; these read LGML…SPLY, ILAL…VLFI, VLVI…MITP, SGLE…LFLI, LFGP…INGI, FFIV…LALT, WFAL…ALLL, LLAP…ATVI, IYIG…VLGF, VAVT…MLLL, PVLA…FFAA, and IFQG…LMTT.

This sequence belongs to the HAK/KUP transporter (TC 2.A.72) family.

It is found in the cell inner membrane. The enzyme catalyses K(+)(in) + H(+)(in) = K(+)(out) + H(+)(out). In terms of biological role, transport of potassium into the cell. Likely operates as a K(+):H(+) symporter. This Pseudomonas fluorescens (strain ATCC BAA-477 / NRRL B-23932 / Pf-5) protein is Probable potassium transport system protein Kup.